The chain runs to 364 residues: D-alanine--D-alanine ligase (364 aa).

Residues 134–347 (RRLACINGLK…YPDLLDELIN (214 aa)) form the ATP-grasp domain. 167 to 222 (ASEFGWPLFVKPCSLGSSVGIHKANNMDELNAAVADALRYDEEILVEEFIVGREIE) serves as a coordination point for ATP. Mg(2+) is bound by residues D300, E314, and N316.

It belongs to the D-alanine--D-alanine ligase family. It depends on Mg(2+) as a cofactor. Mn(2+) serves as cofactor.

The protein localises to the cytoplasm. The catalysed reaction is 2 D-alanine + ATP = D-alanyl-D-alanine + ADP + phosphate + H(+). The protein operates within cell wall biogenesis; peptidoglycan biosynthesis. In terms of biological role, cell wall formation. The sequence is that of D-alanine--D-alanine ligase from Legionella pneumophila (strain Lens).